The sequence spans 151 residues: Large ribosomal subunit protein bL9 (151 aa).

It belongs to the bacterial ribosomal protein bL9 family.

Its function is as follows. Binds to the 23S rRNA. This is Large ribosomal subunit protein bL9 from Kosmotoga olearia (strain ATCC BAA-1733 / DSM 21960 / TBF 19.5.1).